The primary structure comprises 595 residues: Metacaspase-1 (595 aa).

Residues His-411 and Cys-466 contribute to the active site.

This sequence belongs to the peptidase C14B family. Monomer.

Its activity is regulated as follows. Activated by Ca(2+). Functionally, cysteine protease that cleaves specifically after arginine or lysine residues. The chain is Metacaspase-1 from Plasmodium berghei (strain Anka).